The following is a 137-amino-acid chain: Ribosome-binding factor A (137 aa).

The interval 114 to 137 (QLIDEARAEDRELRPEDDETGNNE) is disordered. Residues 117 to 127 (DEARAEDRELR) show a composition bias toward basic and acidic residues. The segment covering 128-137 (PEDDETGNNE) has biased composition (acidic residues).

The protein belongs to the RbfA family. In terms of assembly, monomer. Binds 30S ribosomal subunits, but not 50S ribosomal subunits or 70S ribosomes.

The protein localises to the cytoplasm. One of several proteins that assist in the late maturation steps of the functional core of the 30S ribosomal subunit. Associates with free 30S ribosomal subunits (but not with 30S subunits that are part of 70S ribosomes or polysomes). Required for efficient processing of 16S rRNA. May interact with the 5'-terminal helix region of 16S rRNA. This chain is Ribosome-binding factor A, found in Alcanivorax borkumensis (strain ATCC 700651 / DSM 11573 / NCIMB 13689 / SK2).